The primary structure comprises 510 residues: Glycerol kinase (510 aa).

Thr14 contacts ADP. ATP contacts are provided by Thr14 and Thr15. Thr14 contributes to the sn-glycerol 3-phosphate binding site. Arg18 contributes to the ADP binding site. Sn-glycerol 3-phosphate-binding residues include Arg84, Glu85, Tyr136, and Asp256. Positions 84, 85, 136, 256, and 257 each coordinate glycerol. Residues Thr278, Gly322, Gly422, and Asn426 each coordinate ADP. ATP contacts are provided by Thr278, Gly322, and Gly422.

This sequence belongs to the FGGY kinase family.

The enzyme catalyses glycerol + ATP = sn-glycerol 3-phosphate + ADP + H(+). Its pathway is polyol metabolism; glycerol degradation via glycerol kinase pathway; sn-glycerol 3-phosphate from glycerol: step 1/1. Key enzyme in the regulation of glycerol uptake and metabolism. Catalyzes the phosphorylation of glycerol to yield sn-glycerol 3-phosphate. It also catalyzes the phosphorylation of dihydroxyacetone (DHA). Involved, together with the DHA kinase DhaKLM, in the metabolism of DHA. The chain is Glycerol kinase from Haloferax volcanii (strain ATCC 29605 / DSM 3757 / JCM 8879 / NBRC 14742 / NCIMB 2012 / VKM B-1768 / DS2) (Halobacterium volcanii).